Reading from the N-terminus, the 279-residue chain is uncharacterized protein (279 aa).

It belongs to the peptidase C59 family.

This is an uncharacterized protein from Chlorella (PBCV-1).